The primary structure comprises 154 residues: Protein E6 (154 aa).

Zinc fingers lie at residues Cys34–Cys70 and Cys107–Cys143.

This sequence belongs to the papillomaviridae E6 protein family. As to quaternary structure, forms homodimers. Interacts with ubiquitin-protein ligase UBE3A/E6-AP; this interaction stimulates UBE3A ubiquitin activity. Interacts with host TP53 and EP300; this interaction inhibits TP53 activity.

Its subcellular location is the host cytoplasm. It is found in the host nucleus. Plays a major role in the induction and maintenance of cellular transformation. E6 associates with host UBE3A/E6-AP ubiquitin-protein ligase and modulates its activity. Sequesters tumor suppressor TP53 in the host cytoplasm and modulates its activity by interacting with host EP300 that results in the reduction of TP53 acetylation and activation. In turn, apoptosis induced by DNA damage is inhibited. E6 also protects host keratinocytes from apoptosis by mediating the degradation of host BAK1. May also inhibit host immune response. In Human papillomavirus type 53, this protein is Protein E6.